A 703-amino-acid polypeptide reads, in one-letter code: Solute carrier family 28 member 3 (703 aa).

Positions 1–19 (MSRADPGKNSEPSESKMSL) are enriched in basic and acidic residues. Residues 1-93 (MSRADPGKNS…DPEDDSEDEH (93 aa)) are disordered. The Cytoplasmic portion of the chain corresponds to 1–117 (MSRADPGKNS…FCRKHRVVLR (117 aa)). Residues 44 to 61 (QNTPGNSTVRNRVVQSGE) are compositionally biased toward polar residues. Basic and acidic residues predominate over residues 63-72 (GHAKQDDRQI). Residues 118-138 (STIWAVLLTGFLALVIAACAI) traverse the membrane as a helical segment. Topologically, residues 139–143 (NFHRA) are extracellular. Residues 144-164 (LPLFVITLVTIFFVIWDHLMA) traverse the membrane as a helical segment. Residues 165–188 (KYEQRIDDFLSPGRRLLDRHWFWL) are Cytoplasmic-facing. A helical membrane pass occupies residues 189–209 (KWVVWSSLILAIILWLSLDTA). At 210 to 212 (KLG) the chain is on the extracellular side. A helical transmembrane segment spans residues 213–234 (QQNLVSFGGLIMYLILLFLFSK). The Cytoplasmic portion of the chain corresponds to 235–242 (HPTRVYWR). Residues 243–262 (PVFWGIGLQFLLGLLILRTR) traverse the membrane as a helical segment. Residues 263–299 (PGFVAFDWMGRQVQTFLGYTDTGARFVFGEKYTDHFF) are Extracellular-facing. A helical membrane pass occupies residues 300-320 (AFKILPIVVFFSTVMSMLYYL). At 321-344 (GLMQWIIRKVGWLMLVTMGSSPIE) the chain is on the cytoplasmic side. An intramembrane region (helical) is located at residues 345–363 (SVVAAGNIFIGQTESPLLV). The Cytoplasmic portion of the chain corresponds to 364–376 (QPYLPHVTKSELH). A helical membrane pass occupies residues 377–399 (TIMTAGFATIAGSVLGAYISFGV). Topologically, residues 400–401 (SS) are extracellular. The helical transmembrane segment at 402 to 423 (THLLTASVMSAPAALAVAKLFW) threads the bilayer. Residues 424–458 (PETEKPKITLKSAMKMENGDSRNLLEAASQGASSS) lie on the Cytoplasmic side of the membrane. The chain crosses the membrane as a helical span at residues 459-484 (IPLVANIAANLIAFLALLSFVNSALS). Residues 485-522 (WFGSMFNYPELSFELICSYIFMPFSFMMGVDWQDSFMV) are Extracellular-facing. An intramembrane region (helical) is located at residues 523–542 (AKLIGYKTFFNEFVAYDHLS). Over 543–581 (KLINLRKAAGPKFVNGVQQYMSIRSETIATYALCGFANF) the chain is Extracellular. The chain crosses the membrane as a helical span at residues 582–592 (GSLGIVIGGLT). Residues 593–605 (SIAPSRKRDIASG) lie on the Cytoplasmic side of the membrane. The chain crosses the membrane as a helical span at residues 606–628 (AMRALIAGTIACFMTACIAGILS). Topologically, residues 629–703 (DTPVDINCHH…LNCNWIPNKL (75 aa)) are extracellular.

The protein belongs to the concentrative nucleoside transporter (CNT) (TC 2.A.41) family. In terms of assembly, homotrimer.

Its subcellular location is the cell membrane. It catalyses the reaction thymidine(out) + 2 Na(+)(out) = thymidine(in) + 2 Na(+)(in). The catalysed reaction is cytidine(out) + 2 Na(+)(out) = cytidine(in) + 2 Na(+)(in). It carries out the reaction uridine(out) + 2 Na(+)(out) = uridine(in) + 2 Na(+)(in). The enzyme catalyses adenosine(out) + 2 Na(+)(out) = adenosine(in) + 2 Na(+)(in). It catalyses the reaction guanosine(out) + 2 Na(+)(out) = guanosine(in) + 2 Na(+)(in). The catalysed reaction is inosine(out) + 2 Na(+)(out) = inosine(in) + 2 Na(+)(in). Its function is as follows. Sodium-dependent, pyrimidine- and purine-selective. Involved in the homeostasis of endogenous nucleosides. Exhibits the transport characteristics of the nucleoside transport system cib or N3 subtype (N3/cib) (with marked transport of both thymidine and inosine). Employs a 2:1 sodium/nucleoside ratio. Also able to transport gemcitabine, 3'-azido-3'-deoxythymidine (AZT), ribavirin and 3-deazauridine. This Mus musculus (Mouse) protein is Solute carrier family 28 member 3 (Slc28a3).